Here is a 207-residue protein sequence, read N- to C-terminus: Small ribosomal subunit protein uS4 (207 aa).

Positions 29–38 (QDKAKFDSKP) are enriched in basic and acidic residues. Positions 29–54 (QDKAKFDSKPGQHGRTSGQRTSDYGL) are disordered. Residues 42 to 52 (GRTSGQRTSDY) show a composition bias toward polar residues. The S4 RNA-binding domain maps to 97–160 (SRLDNVVYRM…KKQTRIAEAL (64 aa)).

This sequence belongs to the universal ribosomal protein uS4 family. As to quaternary structure, part of the 30S ribosomal subunit. Contacts protein S5. The interaction surface between S4 and S5 is involved in control of translational fidelity.

Its function is as follows. One of the primary rRNA binding proteins, it binds directly to 16S rRNA where it nucleates assembly of the body of the 30S subunit. With S5 and S12 plays an important role in translational accuracy. In Variovorax paradoxus (strain S110), this protein is Small ribosomal subunit protein uS4.